The primary structure comprises 244 residues: Cysteine-rich secretory protein 1 (244 aa).

Residues methionine 1–leucine 19 form the signal peptide. The SCP domain occupies serine 44–tyrosine 170. Residue asparagine 145 is glycosylated (N-linked (GlcNAc...) asparagine). Cystine bridges form between cysteine 190/cysteine 197, cysteine 193/cysteine 202, cysteine 206/cysteine 239, cysteine 215/cysteine 233, and cysteine 224/cysteine 237. The ShKT domain occupies cysteine 206–cysteine 239.

The protein belongs to the CRISP family. Mainly found in the cauda epididymis where it is synthesized by the principal cells and secreted into the lumen. Binds to the heads of spermatozoa. Also expressed in the submandibular gland.

The protein localises to the cytoplasmic vesicle. It is found in the secretory vesicle. Its function is as follows. This protein is supposed to help spermatozoa undergo functional maturation while they move from the testis to the ductus deferens. The sequence is that of Cysteine-rich secretory protein 1 (Crisp1) from Mus musculus (Mouse).